We begin with the raw amino-acid sequence, 149 residues long: Large ribosomal subunit protein uL13 (149 aa).

Belongs to the universal ribosomal protein uL13 family. As to quaternary structure, part of the 50S ribosomal subunit.

Its function is as follows. This protein is one of the early assembly proteins of the 50S ribosomal subunit, although it is not seen to bind rRNA by itself. It is important during the early stages of 50S assembly. The protein is Large ribosomal subunit protein uL13 of Chlamydia pneumoniae (Chlamydophila pneumoniae).